Consider the following 188-residue polypeptide: dCTP deaminase (188 aa).

DCTP is bound by residues 111–116 (KSTYAR), 135–137 (TLE), Q156, Y170, and Q180. The active-site Proton donor/acceptor is the E137.

The protein belongs to the dCTP deaminase family. In terms of assembly, homotrimer.

It catalyses the reaction dCTP + H2O + H(+) = dUTP + NH4(+). The protein operates within pyrimidine metabolism; dUMP biosynthesis; dUMP from dCTP (dUTP route): step 1/2. In terms of biological role, catalyzes the deamination of dCTP to dUTP. This chain is dCTP deaminase, found in Herminiimonas arsenicoxydans.